A 128-amino-acid chain; its full sequence is Mu-like prophage FluMu protein gp35 (128 aa).

A disordered region spans residues 53–87 (TETGSQEGGEGLSKEPAGSDEQKQLRADPPSTDLN).

The protein to phage Mu protein gp35. Monomer.

This is Mu-like prophage FluMu protein gp35 from Haemophilus influenzae (strain ATCC 51907 / DSM 11121 / KW20 / Rd).